The primary structure comprises 493 residues: uncharacterized protein (493 aa).

A helical transmembrane segment spans residues 10–30 (LVPSTRFALSLVMFFGCLVTY). N-linked (GlcNAc...) asparagine glycans are attached at residues asparagine 35, asparagine 47, and asparagine 69. Transmembrane regions (helical) follow at residues 85 to 105 (MVLS…GHLA), 112 to 132 (RVVF…PVAA), 144 to 164 (AAIG…WSVW), 175 to 195 (GVTY…SGFL), 205 to 225 (PSIF…WWYV), and 272 to 292 (AVWA…TMLV). N-linked (GlcNAc...) asparagine glycosylation is present at asparagine 305. The next 4 membrane-spanning stretches (helical) occupy residues 311–331 (AVAS…GVLA), 348–368 (AAML…GYCG), 375–395 (VIIF…GFVV), and 406–426 (GTVM…SPAV). A glycan (N-linked (GlcNAc...) asparagine) is linked at asparagine 433. The helical transmembrane segment at 441 to 461 (MVLWLTAGILTIGALLFSIFA) threads the bilayer.

Belongs to the major facilitator superfamily. Sodium/anion cotransporter family.

It localises to the membrane. This is an uncharacterized protein from Caenorhabditis elegans.